The primary structure comprises 321 residues: Homoserine O-acetyltransferase (321 aa).

Catalysis depends on Cys142, which acts as the Acyl-thioester intermediate. Residues Lys163 and Ser192 each coordinate substrate. Catalysis depends on His235, which acts as the Proton acceptor. The active site involves Glu237. Arg249 is a binding site for substrate.

The protein belongs to the MetA family.

It is found in the cytoplasm. It catalyses the reaction L-homoserine + acetyl-CoA = O-acetyl-L-homoserine + CoA. Its pathway is amino-acid biosynthesis; L-methionine biosynthesis via de novo pathway; O-acetyl-L-homoserine from L-homoserine: step 1/1. Its function is as follows. Transfers an acetyl group from acetyl-CoA to L-homoserine, forming acetyl-L-homoserine. The sequence is that of Homoserine O-acetyltransferase from Lactococcus lactis subsp. lactis (strain IL1403) (Streptococcus lactis).